A 252-amino-acid polypeptide reads, in one-letter code: Large ribosomal subunit protein uL10m (252 aa).

Residues 1–24 (MAATLCCRLLPKAGWVPLTQSVRH) constitute a mitochondrion transit peptide.

This sequence belongs to the universal ribosomal protein uL10 family. As to quaternary structure, component of the mitochondrial ribosome large subunit (39S) which comprises a 16S rRNA and about 50 distinct proteins.

It localises to the mitochondrion. In Danio rerio (Zebrafish), this protein is Large ribosomal subunit protein uL10m (mrpl10).